The primary structure comprises 1349 residues: DNA-directed RNA polymerase subunit beta' (1349 aa).

4 residues coordinate Zn(2+): Cys-219, Cys-293, Cys-300, and Cys-303. Residues 1298–1349 (LDSPTLGESGFGSRRAERSVLDDEDELIADEVVDDDDFEEEEEDDEDDFDDE) form a disordered region. The segment covering 1319–1349 (DDEDELIADEVVDDDDFEEEEEDDEDDFDDE) has biased composition (acidic residues).

This sequence belongs to the RNA polymerase beta' chain family. RpoC2 subfamily. In terms of assembly, in cyanobacteria the RNAP catalytic core is composed of 2 alpha, 1 beta, 1 beta', 1 gamma and 1 omega subunit. When a sigma factor is associated with the core the holoenzyme is formed, which can initiate transcription. The cofactor is Zn(2+).

The catalysed reaction is RNA(n) + a ribonucleoside 5'-triphosphate = RNA(n+1) + diphosphate. DNA-dependent RNA polymerase catalyzes the transcription of DNA into RNA using the four ribonucleoside triphosphates as substrates. The protein is DNA-directed RNA polymerase subunit beta' of Nostoc punctiforme (strain ATCC 29133 / PCC 73102).